Here is a 311-residue protein sequence, read N- to C-terminus: Arginine/serine-rich protein 1 (311 aa).

The tract at residues methionine 1–serine 125 is disordered. Phosphoserine is present on serine 12. Over residues serine 20–serine 31 the composition is skewed to low complexity. Residues serine 32–glycine 123 are compositionally biased toward basic residues. A phosphoserine mark is found at serine 109 and serine 111. Residue arginine 135 is modified to Omega-N-methylarginine.

Belongs to the RSRP family. In terms of processing, phosphorylated. Phosphorylation at Ser-109 and Ser-111 mediates the interaction with spliceosome proteins.

The protein localises to the nucleus. Functionally, probably acts as a spliceosomal factor that contributes to spliceosome assembly and regulates the isoform switching of proteins such as PARP6. In Pongo abelii (Sumatran orangutan), this protein is Arginine/serine-rich protein 1 (RSRP1).